The chain runs to 147 residues: Ubiquitin-conjugating enzyme E2 D3 (147 aa).

A UBC core domain is found at 1–147 (MALKRINKEL…SREWTQKYAM (147 aa)). Cys-21 and Cys-107 are joined by a disulfide. The Glycyl thioester intermediate role is filled by Cys-85.

This sequence belongs to the ubiquitin-conjugating enzyme family. As to quaternary structure, interacts with SCF (SKP1-CUL1-F-box protein) E3 ubiquitin ligase complex; when Cullin is neddylated, the interaction between the E2 and the SCF complex is strengthened. Interacts with DAPK3. Interacts with BRCA1; the DNA damage checkpoint promotes the association with BRCA1 after ionizing radiation. Interacts non-covalently with ubiquitin. Interacts with E3 ubiquitin-protein ligase CBLC. Interacts with UBTD1. Interacts with RIGI and RNF135; involved in RIGI ubiquitination and activation. Phosphorylated by AURKB.

It localises to the cell membrane. The protein localises to the endosome membrane. The catalysed reaction is S-ubiquitinyl-[E1 ubiquitin-activating enzyme]-L-cysteine + [E2 ubiquitin-conjugating enzyme]-L-cysteine = [E1 ubiquitin-activating enzyme]-L-cysteine + S-ubiquitinyl-[E2 ubiquitin-conjugating enzyme]-L-cysteine.. The enzyme catalyses S-ubiquitinyl-[E1 ubiquitin-activating enzyme]-L-cysteine + [acceptor protein]-L-lysine = [E1 ubiquitin-activating enzyme]-L-cysteine + N(6)-monoubiquitinyl-[acceptor protein]-L-lysine.. It functions in the pathway protein modification; protein ubiquitination. Its function is as follows. Accepts ubiquitin from the E1 complex and catalyzes its covalent attachment to other proteins. In vitro catalyzes 'Lys-11'-, as well as 'Lys-48'-linked polyubiquitination. Cooperates with the E2 CDC34 and the SCF(FBXW11) E3 ligase complex for the polyubiquitination of NFKBIA leading to its subsequent proteasomal degradation. Acts as an initiator E2, priming the phosphorylated NFKBIA target at positions 'Lys-21' and/or 'Lys-22' with a monoubiquitin. Ubiquitin chain elongation is then performed by CDC34, building ubiquitin chains from the UBE2D3-primed NFKBIA-linked ubiquitin. Also acts as an initiator E2, in conjunction with RNF8, for the priming of PCNA. Monoubiquitination of PCNA, and its subsequent polyubiquitination, are essential events in the operation of the DNA damage tolerance (DDT) pathway that is activated after DNA damage caused by UV or chemical agents during S-phase. Associates with the BRCA1/BARD1 E3 ligase complex to perform ubiquitination at DNA damage sites following ionizing radiation leading to DNA repair. Targets DAPK3 for ubiquitination which influences promyelocytic leukemia protein nuclear body (PML-NB) formation in the nucleus. In conjunction with the MDM2 and TOPORS E3 ligases, functions ubiquitination of p53/TP53. In conjunction with the CBL E3 ligase, targets EGFR for polyubiquitination at the plasma membrane as well as during its internalization and transport on endosomes. In conjunction with the STUB1 E3 quality control E3 ligase, ubiquitinates unfolded proteins to catalyze their immediate destruction. Together with RNF135, catalyzes the viral RNA-dependent 'Lys-63'-linked polyubiquitination of RIGI to activate the downstream signaling pathway that leads to interferon beta production. Together with ZNF598, catalyzes ubiquitination of 40S ribosomal proteins in response to ribosome collisions. In cooperation with the GATOR2 complex, catalyzes 'Lys-6'-linked ubiquitination of NPRL2. This chain is Ubiquitin-conjugating enzyme E2 D3 (UBE2D3), found in Homo sapiens (Human).